A 577-amino-acid polypeptide reads, in one-letter code: Jasmonoyl--L-amino acid synthetase JAR4 (577 aa).

Serine 99 contributes to the ATP binding site. Residue serine 102 participates in jasmonate binding. ATP-binding positions include methionine 119, threonine 122, glycine 163, asparagine 168, and 331-336; that span reads GSSEGW. 166-170 contributes to the an L-alpha-amino acid binding site; it reads TTNVY. A jasmonate-binding site is contributed by 328 to 331; it reads ADYG. 531-535 contributes to the an L-alpha-amino acid binding site; it reads KILDH.

The protein belongs to the IAA-amido conjugating enzyme family.

It carries out the reaction a jasmonate + an L-alpha-amino acid + ATP = a jasmonyl-L-amino acid + AMP + diphosphate + H(+). Functionally, catalyzes the synthesis of jasmonate-amino acid conjugates by adenylation. Catalyzes the conjugation of jasmonate (JA) to Ile, Leu and Val. Catalyzes the conjugation of jasmonate (JA) to Ile to mediate defense signaling and resistance to the herbivore Manduca sexta caterpillars. This chain is Jasmonoyl--L-amino acid synthetase JAR4, found in Nicotiana attenuata (Coyote tobacco).